Here is a 179-residue protein sequence, read N- to C-terminus: Protein GrpE (179 aa).

The tract at residues 1-20 (MSEETKEEIKNEKVDEEVTE) is disordered.

It belongs to the GrpE family. As to quaternary structure, homodimer.

Its subcellular location is the cytoplasm. In terms of biological role, participates actively in the response to hyperosmotic and heat shock by preventing the aggregation of stress-denatured proteins, in association with DnaK and GrpE. It is the nucleotide exchange factor for DnaK and may function as a thermosensor. Unfolded proteins bind initially to DnaJ; upon interaction with the DnaJ-bound protein, DnaK hydrolyzes its bound ATP, resulting in the formation of a stable complex. GrpE releases ADP from DnaK; ATP binding to DnaK triggers the release of the substrate protein, thus completing the reaction cycle. Several rounds of ATP-dependent interactions between DnaJ, DnaK and GrpE are required for fully efficient folding. The sequence is that of Protein GrpE from Lactococcus lactis subsp. lactis (strain IL1403) (Streptococcus lactis).